We begin with the raw amino-acid sequence, 506 residues long: CDK5 regulatory subunit-associated protein 3 (506 aa).

3 consecutive short sequence motifs (shuffled ATG8-binding motif) follow at residues 267-270 (IDWG), 292-295 (IDWG), and 310-313 (IDWG). The tract at residues 269-506 (WGDFGVEAVS…RPVNLMGTSL (238 aa)) is required for interaction with UFL1 and mediates interaction with CHEK1. An RPL10a-binding domain (RBD) region spans residues 355 to 370 (DELMELEIFLAQRAVE). A Glycyl lysine isopeptide (Lys-Gly) (interchain with G-Cter in SUMO2) cross-link involves residue Lys450.

Belongs to the CDK5RAP3 family. As to quaternary structure, substrate adapter component of the UFM1 ribosome E3 ligase (UREL) complex, composed of UFL1, DDRGK1 and CDK5RAP3. Interaction with UFL1 anchors CDK5RAP3 in the cytoplasm, preventing its translocation to the nucleus which allows expression of the CCND1 cyclin and progression of cells through the G1/S transition. Interacts with ATG8 family proteins MAP1LC3A, MAP1LC3B, GABARAP, GABARAPL1 and GABARAPL2. Interacts with CDK5R1; competes with CDK5RAP1 and CDK5RAP2. Interacts with RELA. Interacts with CHEK1; may negatively regulate CHEK1 and thereby stimulate entry into mitosis. Interacts with CDKN2A/ARF and MDM2; forms a ternary complex involved in regulation of p53/TP53. Interacts with MAPK14. Interacts with CCNB1. Interacts with TUBG1; may regulate CDK5RAP3 in mitotic G2/M transition checkpoint. (Microbial infection) Interacts with hepatitis B virus large envelope protein mutant pre-s2; promotes mitotic entry. Post-translationally, may be phosphorylated by CDK5. Ubiquitinated. Probably triggers proteasomal degradation and is negatively regulated by UFL1. In terms of processing, may be ufmylated. Post-translationally, cleaved by caspases early during apoptosis, the resulting peptides may play a role in rupture of the nuclear envelope. As to expression, ubiquitously expressed. Expressed in heart, brain, placenta, lung, liver, skeletal muscle, kidney and pancreas. Isoform 3 is expressed in kidney, liver, skeletal muscle and placenta.

The protein resides in the endoplasmic reticulum membrane. The protein localises to the cytoplasm. It localises to the nucleus. Its subcellular location is the cytoskeleton. It is found in the microtubule organizing center. The protein resides in the centrosome. Functionally, substrate adapter of E3 ligase complexes mediating ufmylation, the covalent attachment of the ubiquitin-like modifier UFM1 to substrate proteins, and which is involved in various processes, such as ribosome recycling and reticulophagy (also called ER-phagy). As part of the UREL complex, plays a key role in ribosome recycling by promoting mono-ufmylation of RPL26/uL24 subunit of the 60S ribosome. Ufmylation of RPL26/uL24 occurs on free 60S ribosomes following ribosome dissociation: it weakens the junction between post-termination 60S subunits and SEC61 translocons, promoting release and recycling of the large ribosomal subunit from the endoplasmic reticulum membrane. Ufmylation of RPL26/uL24 and subsequent 60S ribosome recycling either take place after normal termination of translation or after ribosome stalling during cotranslational translocation at the endoplasmic reticulum. Within the UREL complex, CDK5RAP3 acts as a substrate adapter that constrains UFL1 ligase activity to mono-ufmylate RPL26/uL24 at 'Lys-134'. The UREL complex is also involved in reticulophagy in response to endoplasmic reticulum stress by promoting ufmylation of proteins such as CYB5R3, thereby promoting lysosomal degradation of ufmylated proteins. Also acts as a regulator of transcription: negatively regulates NF-kappa-B-mediated gene transcription through the control of RELA phosphorylation. Also regulates mitotic G2/M transition checkpoint and mitotic G2 DNA damage checkpoint. Through its interaction with CDKN2A/ARF and MDM2 may induce MDM2-dependent p53/TP53 ubiquitination, stabilization and activation in the nucleus, thereby promoting G1 cell cycle arrest and inhibition of cell proliferation. May also play a role in the rupture of the nuclear envelope during apoptosis. May regulate MAPK14 activity by regulating its dephosphorylation by PPM1D/WIP1. Required for liver development. (Microbial infection) May be negatively regulated by hepatitis B virus large envelope protein mutant pre-s2 to promote mitotic entry. The polypeptide is CDK5 regulatory subunit-associated protein 3 (Homo sapiens (Human)).